Here is a 190-residue protein sequence, read N- to C-terminus: Potassium-transporting ATPase KdpC subunit (190 aa).

A helical membrane pass occupies residues 6–26 (PAVFLVLLLTLITGLLYPLLT). The interval 67–88 (GRPSATSDRPYNPLASSGSNLA) is disordered. Over residues 69-88 (PSATSDRPYNPLASSGSNLA) the composition is skewed to polar residues.

It belongs to the KdpC family. In terms of assembly, the system is composed of three essential subunits: KdpA, KdpB and KdpC.

The protein resides in the cell inner membrane. In terms of biological role, part of the high-affinity ATP-driven potassium transport (or Kdp) system, which catalyzes the hydrolysis of ATP coupled with the electrogenic transport of potassium into the cytoplasm. This subunit acts as a catalytic chaperone that increases the ATP-binding affinity of the ATP-hydrolyzing subunit KdpB by the formation of a transient KdpB/KdpC/ATP ternary complex. This is Potassium-transporting ATPase KdpC subunit from Erwinia tasmaniensis (strain DSM 17950 / CFBP 7177 / CIP 109463 / NCPPB 4357 / Et1/99).